Reading from the N-terminus, the 334-residue chain is Aspartate carbamoyltransferase catalytic subunit (334 aa).

Arginine 71 and threonine 72 together coordinate carbamoyl phosphate. Lysine 99 serves as a coordination point for L-aspartate. Residues arginine 121, histidine 151, and glutamine 154 each coordinate carbamoyl phosphate. Positions 184 and 239 each coordinate L-aspartate. Carbamoyl phosphate is bound by residues glycine 280 and proline 281.

It belongs to the aspartate/ornithine carbamoyltransferase superfamily. ATCase family. In terms of assembly, heterododecamer (2C3:3R2) of six catalytic PyrB chains organized as two trimers (C3), and six regulatory PyrI chains organized as three dimers (R2).

It catalyses the reaction carbamoyl phosphate + L-aspartate = N-carbamoyl-L-aspartate + phosphate + H(+). The protein operates within pyrimidine metabolism; UMP biosynthesis via de novo pathway; (S)-dihydroorotate from bicarbonate: step 2/3. Its function is as follows. Catalyzes the condensation of carbamoyl phosphate and aspartate to form carbamoyl aspartate and inorganic phosphate, the committed step in the de novo pyrimidine nucleotide biosynthesis pathway. This chain is Aspartate carbamoyltransferase catalytic subunit, found in Pseudomonas putida (strain GB-1).